The primary structure comprises 381 residues: Sulfofructose kinase (381 aa).

Residues G10, 72–73 (RY), and 100–103 (GNGT) each bind ATP. N101 is a binding site for Mg(2+). The active-site Proton acceptor is the D131.

This sequence belongs to the phosphofructokinase type A (PFKA) family. Requires Mg(2+) as cofactor.

The enzyme catalyses 6-deoxy-6-sulfo-D-fructose + ATP = 6-deoxy-6-sulfo-D-fructose 1-phosphate + ADP + H(+). Functionally, part of the sulfo-EMP2 pathway, a D-sulfoquinovose degradation pathway that produces sulfolactate (SL). Phosphorylates 6-deoxy-6-sulfo-D-fructose (SF) to 6-deoxy-6-sulfo-D-fructose 1-phosphate (SFP). The protein is Sulfofructose kinase of Alkalicoccus urumqiensis (Bacillus urumqiensis).